A 340-amino-acid chain; its full sequence is Acidic endochitinase WIN6 (340 aa).

The first 22 residues, 1–22 (MSVWALFAFFSLFLSLSVRGSA), serve as a signal peptide directing secretion. Residues 23–63 (EQCGRQAGDALCPGGLCCSSYGWCGTTVDYCGIGCQSQCDG) enclose the Chitin-binding type-1 domain. Cystine bridges form between C25/C40, C34/C46, C39/C53, and C57/C61. The interval 64–85 (GGGGDGGDDGCDGGDDGGGDGD) is spacer. The tract at residues 86-340 (DGYLSDIIPK…YGLSGLKDTM (255 aa)) is chitinase. 3 disulfide bridges follow: C110-C172, C183-C191, and C290-C323. The active-site Proton donor is E154.

Belongs to the glycosyl hydrolase 19 family. Chitinase class I subfamily.

It carries out the reaction Random endo-hydrolysis of N-acetyl-beta-D-glucosaminide (1-&gt;4)-beta-linkages in chitin and chitodextrins.. Defense against chitin-containing fungal pathogens. This Populus trichocarpa (Western balsam poplar) protein is Acidic endochitinase WIN6 (WIN6).